Here is a 763-residue protein sequence, read N- to C-terminus: Probable ubiquitin carboxyl-terminal hydrolase MINDY-4 (763 aa).

The residue at position 143 (S143) is a Phosphoserine. Positions 154–368 are disordered; sequence SSKRSSHKSR…SQPASLRKNQ (215 aa). Over residues 180–202 the composition is skewed to basic and acidic residues; it reads EKTDKLPMSEPSLDTKRMGEKVR. Phosphoserine occurs at positions 220 and 224. The segment covering 252-261 has biased composition (polar residues); the sequence is ELSTHTSTCP. Over residues 267–278 the composition is skewed to low complexity; that stretch reads PASSTASTSRSP. At S296 the chain carries Phosphoserine. A compositionally biased stretch (basic and acidic residues) spans 346–355; it reads TQERPERAFE. Polar residues predominate over residues 357–368; sequence QGSQPASLRKNQ. C463 functions as the Nucleophile in the catalytic mechanism. H683 functions as the Proton acceptor in the catalytic mechanism.

This sequence belongs to the MINDY deubiquitinase family. FAM188 subfamily.

It catalyses the reaction Thiol-dependent hydrolysis of ester, thioester, amide, peptide and isopeptide bonds formed by the C-terminal Gly of ubiquitin (a 76-residue protein attached to proteins as an intracellular targeting signal).. In terms of biological role, probable hydrolase that can remove 'Lys-48'-linked conjugated ubiquitin from proteins. The chain is Probable ubiquitin carboxyl-terminal hydrolase MINDY-4 (MINDY4) from Bos taurus (Bovine).